The sequence spans 201 residues: CASP-like protein 2B2 (201 aa).

Topologically, residues 1-28 are cytoplasmic; the sequence is MSYLGVGVSPGNVTGSSTKMKLIDRKVR. Residues 29-49 form a helical membrane-spanning segment; that stretch reads VTELILRSLVCAFALVAAILV. Residues 50-71 lie on the Extracellular side of the membrane; that stretch reads ATDVQVREIFTIQKKAKFTDMK. Residues 72–92 traverse the membrane as a helical segment; that stretch reads ALVFLVVINGIAAGYSLVQAV. Over 93-108 the chain is Cytoplasmic; it reads CCLVGLMKGSVLLSEP. The helical transmembrane segment at 109–129 threads the bilayer; that stretch reads LAWAIFFGDQAVAYLCVAGVA. Topologically, residues 130-166 are extracellular; sequence AAAQSAAFAKLGQPELQWMKICDMYGKFCNQVGEGIA. The chain crosses the membrane as a helical span at residues 167–187; that stretch reads SALFACIGMVLISCISAFGVF. The Cytoplasmic portion of the chain corresponds to 188-201; sequence RLYGGSKPRQSSRW.

The protein belongs to the Casparian strip membrane proteins (CASP) family. In terms of assembly, homodimer and heterodimers.

It is found in the cell membrane. This chain is CASP-like protein 2B2, found in Arabidopsis lyrata subsp. lyrata (Lyre-leaved rock-cress).